A 192-amino-acid chain; its full sequence is Molybdenum cofactor guanylyltransferase (192 aa).

Residues 10-12 (LAG), Lys23, Asn51, Asp69, and Asp99 contribute to the GTP site. A Mg(2+)-binding site is contributed by Asp99.

The protein belongs to the MobA family. As to quaternary structure, monomer. It depends on Mg(2+) as a cofactor.

It localises to the cytoplasm. It catalyses the reaction Mo-molybdopterin + GTP + H(+) = Mo-molybdopterin guanine dinucleotide + diphosphate. Functionally, transfers a GMP moiety from GTP to Mo-molybdopterin (Mo-MPT) cofactor (Moco or molybdenum cofactor) to form Mo-molybdopterin guanine dinucleotide (Mo-MGD) cofactor. This Haemophilus influenzae (strain ATCC 51907 / DSM 11121 / KW20 / Rd) protein is Molybdenum cofactor guanylyltransferase.